Reading from the N-terminus, the 133-residue chain is Small ribosomal subunit protein uS8 (133 aa).

Belongs to the universal ribosomal protein uS8 family. Part of the 30S ribosomal subunit. Contacts proteins S5 and S12.

One of the primary rRNA binding proteins, it binds directly to 16S rRNA central domain where it helps coordinate assembly of the platform of the 30S subunit. In Chlamydia abortus (strain DSM 27085 / S26/3) (Chlamydophila abortus), this protein is Small ribosomal subunit protein uS8.